Reading from the N-terminus, the 57-residue chain is UPF0391 membrane protein RPC_3278 (57 aa).

2 helical membrane passes run 4 to 24 and 30 to 50; these read WVIT…GGIA and IAKI…VVGL.

Belongs to the UPF0391 family.

It is found in the cell membrane. This Rhodopseudomonas palustris (strain BisB18) protein is UPF0391 membrane protein RPC_3278.